Consider the following 89-residue polypeptide: Small ribosomal subunit protein uS15 (89 aa).

Belongs to the universal ribosomal protein uS15 family. Part of the 30S ribosomal subunit. Forms a bridge to the 50S subunit in the 70S ribosome, contacting the 23S rRNA.

One of the primary rRNA binding proteins, it binds directly to 16S rRNA where it helps nucleate assembly of the platform of the 30S subunit by binding and bridging several RNA helices of the 16S rRNA. Its function is as follows. Forms an intersubunit bridge (bridge B4) with the 23S rRNA of the 50S subunit in the ribosome. This is Small ribosomal subunit protein uS15 from Heliobacterium modesticaldum (strain ATCC 51547 / Ice1).